A 212-amino-acid chain; its full sequence is Uracil phosphoribosyltransferase (212 aa).

5-phospho-alpha-D-ribose 1-diphosphate-binding positions include R78, R103, and 130–138 (DPMLATGGS). Uracil is bound by residues I193 and 198–200 (GDA). D199 is a binding site for 5-phospho-alpha-D-ribose 1-diphosphate.

Belongs to the UPRTase family. Mg(2+) serves as cofactor.

The catalysed reaction is UMP + diphosphate = 5-phospho-alpha-D-ribose 1-diphosphate + uracil. It participates in pyrimidine metabolism; UMP biosynthesis via salvage pathway; UMP from uracil: step 1/1. Its activity is regulated as follows. Allosterically activated by GTP. Its function is as follows. Catalyzes the conversion of uracil and 5-phospho-alpha-D-ribose 1-diphosphate (PRPP) to UMP and diphosphate. This chain is Uracil phosphoribosyltransferase, found in Pseudomonas aeruginosa (strain LESB58).